Reading from the N-terminus, the 144-residue chain is TSC22 domain family protein 1 (144 aa).

Positions Leu77–Leu98 are leucine-zipper. A disordered region spans residues Gln109–Ala144.

This sequence belongs to the TSC-22/Dip/Bun family. As to quaternary structure, forms homodimers. Forms a heterodimer with TSC22D4/THG1. Interacts with histone H1-2. Interacts with GNL3.

It localises to the cytoplasm. It is found in the nucleus. Its subcellular location is the mitochondrion. In terms of biological role, transcriptional repressor. Plays a role in the repression of hematopoietic precursor cell growth. Promotes IL2 deprivation-induced apoptosis in T-lymphocytes, via repression of TSC22D3/GILZ transcription and activation of the caspase cascade. Positively regulates cell death in response to TGFB3 during mammary gland involution. This chain is TSC22 domain family protein 1, found in Bathyergus suillus (Cape dune mole rat).